We begin with the raw amino-acid sequence, 285 residues long: ATP phosphoribosyltransferase (285 aa).

This sequence belongs to the ATP phosphoribosyltransferase family. Long subfamily. Requires Mg(2+) as cofactor.

The protein resides in the cytoplasm. It catalyses the reaction 1-(5-phospho-beta-D-ribosyl)-ATP + diphosphate = 5-phospho-alpha-D-ribose 1-diphosphate + ATP. It participates in amino-acid biosynthesis; L-histidine biosynthesis; L-histidine from 5-phospho-alpha-D-ribose 1-diphosphate: step 1/9. Its activity is regulated as follows. Feedback inhibited by histidine. Functionally, catalyzes the condensation of ATP and 5-phosphoribose 1-diphosphate to form N'-(5'-phosphoribosyl)-ATP (PR-ATP). Has a crucial role in the pathway because the rate of histidine biosynthesis seems to be controlled primarily by regulation of HisG enzymatic activity. This chain is ATP phosphoribosyltransferase, found in Streptomyces avermitilis (strain ATCC 31267 / DSM 46492 / JCM 5070 / NBRC 14893 / NCIMB 12804 / NRRL 8165 / MA-4680).